The primary structure comprises 403 residues: MAPTGAKKGLLERLDAGEVVIGDGGFVFALEKRGYVKAGPWTPEAAVEHPEAVRQLHREFLRAGANVMQTFTFYASDDKLENRGNYVAKKISGQKVNEAACDIAREVANEGDALVAGGVSQTPSYLSCKSEVEVKGIFRKQLDVFIKKNVDFLIAEYFEHVEEAVWAVEVLKESGKPVAATLCIGPQGDLNGVTPGECAVRLAKAGASVVGVNCHFDPMTCIATVKLMKEGLVAAKVKAHLMTQPLAYHTPDCGKQGFIDLPEFPFALEPRIVTRWDIHKYAREAYNLGVRYIGGCCGFEPYHTRAIAEELAPERGFLPPGSEKHGSWGSGLEMHTKPWVRARARRDYWEKLPPASGRPCCPSMSKPDAWGVTKGDADLMQQKEATTEQQLIDLFAKQCIKSN.

The 304-residue stretch at 8-311 (KGLLERLDAG…YHTRAIAEEL (304 aa)) folds into the Hcy-binding domain. The Zn(2+) site is built by Cys214, Cys296, and Cys297.

As to quaternary structure, homotetramer. Zn(2+) is required as a cofactor.

The protein localises to the cytoplasm. The catalysed reaction is L-homocysteine + glycine betaine = N,N-dimethylglycine + L-methionine. It functions in the pathway amine and polyamine degradation; betaine degradation; sarcosine from betaine: step 1/2. The protein operates within amino-acid biosynthesis; L-methionine biosynthesis via de novo pathway; L-methionine from L-homocysteine (BhmT route): step 1/1. Its function is as follows. Involved in the regulation of homocysteine metabolism. Converts betaine and homocysteine to dimethylglycine and methionine, respectively. This reaction is also required for the irreversible oxidation of choline. The chain is Betaine--homocysteine S-methyltransferase 1 (bhmt) from Xenopus tropicalis (Western clawed frog).